Consider the following 480-residue polypeptide: UDP-N-acetylmuramoylalanine--D-glutamate ligase (480 aa).

127–133 (GTNGKTT) contacts ATP.

Belongs to the MurCDEF family.

The protein localises to the cytoplasm. It carries out the reaction UDP-N-acetyl-alpha-D-muramoyl-L-alanine + D-glutamate + ATP = UDP-N-acetyl-alpha-D-muramoyl-L-alanyl-D-glutamate + ADP + phosphate + H(+). It participates in cell wall biogenesis; peptidoglycan biosynthesis. Functionally, cell wall formation. Catalyzes the addition of glutamate to the nucleotide precursor UDP-N-acetylmuramoyl-L-alanine (UMA). This is UDP-N-acetylmuramoylalanine--D-glutamate ligase from Tropheryma whipplei (strain Twist) (Whipple's bacillus).